A 204-amino-acid polypeptide reads, in one-letter code: Peptide deformylase (204 aa).

Residues Cys131 and His174 each contribute to the Fe cation site. Residue Glu175 is part of the active site. His178 lines the Fe cation pocket.

Belongs to the polypeptide deformylase family. Requires Fe(2+) as cofactor.

The enzyme catalyses N-terminal N-formyl-L-methionyl-[peptide] + H2O = N-terminal L-methionyl-[peptide] + formate. In terms of biological role, removes the formyl group from the N-terminal Met of newly synthesized proteins. Requires at least a dipeptide for an efficient rate of reaction. N-terminal L-methionine is a prerequisite for activity but the enzyme has broad specificity at other positions. The polypeptide is Peptide deformylase (Streptococcus agalactiae serotype III (strain NEM316)).